Here is a 118-residue protein sequence, read N- to C-terminus: Large ribosomal subunit protein bL20 (118 aa).

Belongs to the bacterial ribosomal protein bL20 family.

In terms of biological role, binds directly to 23S ribosomal RNA and is necessary for the in vitro assembly process of the 50S ribosomal subunit. It is not involved in the protein synthesizing functions of that subunit. The protein is Large ribosomal subunit protein bL20 of Rhodopirellula baltica (strain DSM 10527 / NCIMB 13988 / SH1).